Here is an 815-residue protein sequence, read N- to C-terminus: Leucine--tRNA ligase (815 aa).

Positions 42–52 (PYPSGRLHMGH) match the 'HIGH' region motif. Positions 574-578 (KMSKS) match the 'KMSKS' region motif. An ATP-binding site is contributed by K577.

Belongs to the class-I aminoacyl-tRNA synthetase family.

It localises to the cytoplasm. It carries out the reaction tRNA(Leu) + L-leucine + ATP = L-leucyl-tRNA(Leu) + AMP + diphosphate. The polypeptide is Leucine--tRNA ligase (Alcanivorax borkumensis (strain ATCC 700651 / DSM 11573 / NCIMB 13689 / SK2)).